Here is a 248-residue protein sequence, read N- to C-terminus: Granulin (248 aa).

This sequence belongs to the polyhedrin family.

Its function is as follows. Component of the virus occlusion bodies, which are large proteinaceous structures, that protect the virus from the outside environment for extended periods until they are ingested by insect larvae. The protein is Granulin of Trichoplusia ni (Cabbage looper).